Reading from the N-terminus, the 319-residue chain is Ankyrin repeat domain-containing protein 1 (319 aa).

The stretch at 63–89 forms a coiled coil; it reads EKEREAELKKKKLEQRSKLENLEDLEI. ANK repeat units follow at residues 152-181, 185-214, 218-247, 251-280, and 284-315; these read YKRT…QIEF, LEST…KISA, LLST…DLNA, EGDT…DLNV, and AGKT…KASR.

Interacts with TTN/titin and YBX1. In terms of tissue distribution, expressed in heart. In postnatal neonatal heart, it is expressed in an asymmetrical way; left ventricle favored towards right ventricle. Whether or not this could be correlated with a hypertrophic heart is still a matter of debate. Levels increase gradually from newborn to adult.

It is found in the nucleus. In terms of biological role, may play an important role in endothelial cell activation. May act as a nuclear transcription factor that negatively regulates the expression of cardiac genes. The protein is Ankyrin repeat domain-containing protein 1 (ANKRD1) of Sus scrofa (Pig).